The chain runs to 362 residues: Abnormal cell migration protein 13 (362 aa).

The signal sequence occupies residues methionine 1–alanine 20. Over glutamate 21–glycine 237 the chain is Extracellular. 2 disulfide bridges follow: cysteine 36–cysteine 68 and cysteine 98–cysteine 136. One can recognise a CUB domain in the interval cysteine 36–phenylalanine 175. Asparagine 63 is a glycosylation site (N-linked (GlcNAc...) asparagine). N-linked (GlcNAc...) asparagine glycans are attached at residues asparagine 145 and asparagine 161. The 44-residue stretch at asparagine 182–glutamine 225 folds into the LDL-receptor class A domain. 3 disulfide bridges follow: cysteine 183/cysteine 195, cysteine 190/cysteine 208, and cysteine 202/cysteine 224. A helical transmembrane segment spans residues valine 238–valine 258. The Cytoplasmic portion of the chain corresponds to cysteine 259–leucine 362. A disordered region spans residues serine 275–threonine 311. Pro residues predominate over residues aspartate 289–serine 305.

As to quaternary structure, interacts with abl-1 (via SH2 and SH3 domains); the interaction is direct. Interacts with sem-5; the interaction is direct. Expressed in pharyngeal-intestinal valve cells and ventral cord neurons.

It is found in the cell membrane. The protein resides in the perikaryon. The protein localises to the cell projection. It localises to the axon. Its subcellular location is the dendrite. Functionally, probable receptor that acts as an upstream signaling protein to promote the guidance, migration and positioning of the right Q neuroblast (QR) and its descendants along the anteroposterior body axis, and also the anterior migration of BDU interneurons during larval development. Associates with and recruits the downstream components tyrosine kinase abl-1 and the tyrosine kinase adapter protein sem-5 to the leading edge of migrating Q neuroblasts and their descendants to activate signaling through the two parallel wve-1 and wsp-1 pathways, respectively, and direct migration along the anteroposterior body axis. Involved in cytoskeleton dynamics regulating the organization of the actin cytoskeleton at the leading edge of migrating cells to ensure correct Q cell polarity and promote migration. Role in cytoskeleton organization may be by activation of the wve-1 and wsp-1 pathways which recruit the Arp2/3 complex to the leading edge of migrating cells. Plays a role in regulating the asymmetric distribution of the actin cytoskeleton-binding protein cor-1 in Q neuroblasts which is required for the anterior migration of QR neuroblasts. The chain is Abnormal cell migration protein 13 from Caenorhabditis elegans.